The chain runs to 196 residues: Small ribosomal subunit protein uS4c (196 aa).

Positions 89–169 constitute an S4 RNA-binding domain; it reads MRLDNIIFRL…LPKHLTIDTV (81 aa).

The protein belongs to the universal ribosomal protein uS4 family. In terms of assembly, part of the 30S ribosomal subunit. Contacts protein S5. The interaction surface between S4 and S5 is involved in control of translational fidelity.

It localises to the plastid. The protein localises to the chloroplast. Its function is as follows. One of the primary rRNA binding proteins, it binds directly to 16S rRNA where it nucleates assembly of the body of the 30S subunit. Functionally, with S5 and S12 plays an important role in translational accuracy. In Stipellula capensis (Cape rice grass), this protein is Small ribosomal subunit protein uS4c (rps4).